The primary structure comprises 80 residues: MSQEDIFSKVKDIVAEQLSVDVAEVKPESSFQNDLGADSLDTVELVMALEEAFDIEIPDEAAEGIATVQDAVDFIASKAA.

In terms of domain architecture, Carrier spans 4–79 (EDIFSKVKDI…DAVDFIASKA (76 aa)). Ser-39 carries the O-(pantetheine 4'-phosphoryl)serine modification.

Belongs to the acyl carrier protein (ACP) family. 4'-phosphopantetheine is transferred from CoA to a specific serine of apo-ACP by AcpS. This modification is essential for activity because fatty acids are bound in thioester linkage to the sulfhydryl of the prosthetic group.

The protein localises to the cytoplasm. It participates in lipid metabolism; fatty acid biosynthesis. In terms of biological role, carrier of the growing fatty acid chain in fatty acid biosynthesis. The protein is Acyl carrier protein of Synechococcus elongatus (strain ATCC 33912 / PCC 7942 / FACHB-805) (Anacystis nidulans R2).